A 435-amino-acid polypeptide reads, in one-letter code: Maltodextrin transport system permease protein MdxF (435 aa).

The next 8 membrane-spanning stretches (helical) occupy residues 35–55 (LLFLAITGLFAFELCVFGIQA), 73–93 (FMLIEGTLQLIVTMIFLMFYI), 136–156 (AYIMMVFVIIFPVLVTLFVAL), 199–219 (VIWTICATTLQIILGIVTALF), 234–254 (IFLFPWAVPAFITIMSFSNMF), 293–313 (LIMIQTWLGFPYIYVMVTGVL), 337–357 (HITFPMILFATAPVMITQYTF), and 403–423 (VAAAVTLLISFIVIGISLIAF). Residues 195–422 (LGWTVIWTIC…FIVIGISLIA (228 aa)) form the ABC transmembrane type-1 domain.

The protein belongs to the binding-protein-dependent transport system permease family. MalFG subfamily. As to quaternary structure, the complex is composed of two ATP-binding proteins (MsmX), two transmembrane proteins (MdxF and MdxG) and a solute-binding protein (MdxE).

It localises to the cell membrane. Its function is as follows. Part of the ABC transporter complex involved in maltodextrin import. Probably responsible for the translocation of the substrate across the membrane. The chain is Maltodextrin transport system permease protein MdxF (mdxF) from Bacillus subtilis (strain 168).